The following is a 205-amino-acid chain: GTP cyclohydrolase-2 (205 aa).

GTP is bound at residue 49-53 (RLHSE). Residues Cys-54, Cys-65, and Cys-67 each coordinate Zn(2+). GTP-binding positions include Gln-70, 92 to 94 (EGR), and Thr-114. The active-site Proton acceptor is the Asp-126. Catalysis depends on Arg-128, which acts as the Nucleophile. Positions 149 and 154 each coordinate GTP.

It belongs to the GTP cyclohydrolase II family. Zn(2+) serves as cofactor.

The catalysed reaction is GTP + 4 H2O = 2,5-diamino-6-hydroxy-4-(5-phosphoribosylamino)-pyrimidine + formate + 2 phosphate + 3 H(+). The protein operates within cofactor biosynthesis; riboflavin biosynthesis; 5-amino-6-(D-ribitylamino)uracil from GTP: step 1/4. Its function is as follows. Catalyzes the conversion of GTP to 2,5-diamino-6-ribosylamino-4(3H)-pyrimidinone 5'-phosphate (DARP), formate and pyrophosphate. In Pseudomonas aeruginosa (strain UCBPP-PA14), this protein is GTP cyclohydrolase-2.